We begin with the raw amino-acid sequence, 1956 residues long: MEFPIGSLETNNFRRFTPESLVEIEKQIAAKQGTKKAREKHREQKDQEEKPRPQLDLKACNQLPKFYGELPAELIGEPLEDLDPFYSTHRTFMVLNKGRTISRFSATRALWLFSPFNLIRRTAIKVSVHSWFSLFITVTILVNCVCMTRTDLPEKIEYVFTVIYTFEALIKILARGFCLNEFTYLRDPWNWLDFSVITLAYVGTAIDLRGISGLRTFRVLRALKTVSVIPGLKVIVGALIHSVKKLADVTILTIFCLSVFALVGLQLFKGNLKNKCVKNDMAVNETTNYSSHRKPDIYINKRGTSDPLLCGNGSDSGHCPDGYICLKTSDNPDFNYTSFDSFAWAFLSLFRLMTQDSWERLYQQTLRTSGKIYMIFFVLVIFLGSFYLVNLILAVVTMAYEEQNQATTDEIEAKEKKFQEALEMLRKEQEVLAALGIDTTSLHSHNGSPLTSKNASERRHRIKPRVSEGSTEDNKSPRSDPYNQRRMSFLGLASGKRRASHGSVFHFRSPGRDISLPEGVTDDGVFPGDHESHRGSLLLGGGAGQQGPLPRSPLPQPSNPDSRHGEDEHQPPPTSELAPGAVDVSAFDAGQKKTFLSAEYLDEPFRAQRAMSVVSIITSVLEELEESEQKCPPCLTSLSQKYLIWDCCPMWVKLKTILFGLVTDPFAELTITLCIVVNTIFMAMEHHGMSPTFEAMLQIGNIVFTIFFTAEMVFKIIAFDPYYYFQKKWNIFDCIIVTVSLLELGVAKKGSLSVLRSFRLLRVFKLAKSWPTLNTLIKIIGNSVGALGNLTIILAIIVFVFALVGKQLLGENYRNNRKNISAPHEDWPRWHMHDFFHSFLIVFRILCGEWIENMWACMEVGQKSICLILFLTVMVLGNLVVLNLFIALLLNSFSADNLTAPEDDGEVNNLQVALARIQVFGHRTKQALCSFFSRSCPFPQPKAEPELVVKLPLSSSKAENHIAANTARGSSGGLQAPRGPRDEHSDFIANPTVWVSVPIAEGESDLDDLEDDGGEDAQSFQQEVIPKGQQEQLQQVERCGDHLTPRSPGTGTSSEDLAPSLGETWKDESVPQVPAEGVDDTSSSEGSTVDCLDPEEILRKIPELADDLEEPDDCFTEGCIRHCPCCKLDTTKSPWDVGWQVRKTCYRIVEHSWFESFIIFMILLSSGSLAFEDYYLDQKPTVKALLEYTDRVFTFIFVFEMLLKWVAYGFKKYFTNAWCWLDFLIVNISLISLTAKILEYSEVAPIKALRTLRALRPLRALSRFEGMRVVVDALVGAIPSIMNVLLVCLIFWLIFSIMGVNLFAGKFWRCINYTDGEFSLVPLSIVNNKSDCKIQNSTGSFFWVNVKVNFDNVAMGYLALLQVATFKGWMDIMYAAVDSREVNMQPKWEDNVYMYLYFVIFIIFGGFFTLNLFVGVIIDNFNQQKKKLGGQDIFMTEEQKKYYNAMKKLGSKKPQKPIPRPLNKFQGFVFDIVTRQAFDITIMVLICLNMITMMVETDDQSEEKTKILGKINQFFVAVFTGECVMKMFALRQYYFTNGWNVFDFIVVVLSIASLIFSAILKSLQSYFSPTLFRVIRLARIGRILRLIRAAKGIRTLLFALMMSLPALFNIGLLLFLVMFIYSIFGMSSFPHVRWEAGIDDMFNFQTFANSMLCLFQITTSAGWDGLLSPILNTGPPYCDPNLPNSNGTRGDCGSPAVGIIFFTTYIIISFLIMVNMYIAVILENFNVATEESTEPLSEDDFDMFYETWEKFDPEATQFITFSALSDFADTLSGPLRIPKPNRNILIQMDLPLVPGDKIHCLDILFAFTKNVLGESGELDSLKANMEEKFMATNLSKSSYEPIATTLRWKQEDISATVIQKAYRSYVLHRSMALSNTPCVPRAEEEAASLPDEGFVAFTANENCVLPDKSETASATSFPPSYESVTRGLSDRVNMRTSSSIQNEDEATSMELIAPGP.

Over 1 to 125 (MEFPIGSLET…FNLIRRTAIK (125 aa)) the chain is Cytoplasmic. The segment at 27 to 54 (QIAAKQGTKKAREKHREQKDQEEKPRPQ) is disordered. The segment covering 40–54 (KHREQKDQEEKPRPQ) has biased composition (basic and acidic residues). Residues 116 to 405 (FNLIRRTAIK…VTMAYEEQNQ (290 aa)) form an I repeat. Residues 126–149 (VSVHSWFSLFITVTILVNCVCMTR) traverse the membrane as a helical segment. Residues 150–154 (TDLPE) lie on the Extracellular side of the membrane. A helical transmembrane segment spans residues 155–174 (KIEYVFTVIYTFEALIKILA). Over 175–187 (RGFCLNEFTYLRD) the chain is Cytoplasmic. The helical transmembrane segment at 188 to 206 (PWNWLDFSVITLAYVGTAI) threads the bilayer. The Extracellular portion of the chain corresponds to 207–212 (DLRGIS). The helical; Voltage-sensor transmembrane segment at 213–232 (GLRTFRVLRALKTVSVIPGL) threads the bilayer. Residues 233-248 (KVIVGALIHSVKKLAD) lie on the Cytoplasmic side of the membrane. A helical transmembrane segment spans residues 249 to 272 (VTILTIFCLSVFALVGLQLFKGNL). Residues 273 to 341 (KNKCVKNDMA…PDFNYTSFDS (69 aa)) lie on the Extracellular side of the membrane. Cysteines 276 and 319 form a disulfide. N-linked (GlcNAc...) asparagine glycans are attached at residues Asn284, Asn288, Asn312, and Asn335. The pore-forming intramembrane region spans 342-366 (FAWAFLSLFRLMTQDSWERLYQQTL). Residues 367–373 (RTSGKIY) are Extracellular-facing. Residues 374–399 (MIFFVLVIFLGSFYLVNLILAVVTMA) form a helical membrane-spanning segment. At 400-659 (YEEQNQATTD…MWVKLKTILF (260 aa)) the chain is on the cytoplasmic side. Ser441, Ser444, Ser467, and Ser479 each carry phosphoserine. The span at 443-454 (HSHNGSPLTSKN) shows a compositional bias: polar residues. Disordered regions lie at residues 443–485 (HSHN…YNQR) and 500–580 (SHGS…LAPG). A compositionally biased stretch (basic and acidic residues) spans 561–570 (DSRHGEDEHQ). A phosphoserine mark is found at Ser612 and Ser615. One copy of the II repeat lies at 647–911 (CCPMWVKLKT…EDDGEVNNLQ (265 aa)). A helical membrane pass occupies residues 660 to 684 (GLVTDPFAELTITLCIVVNTIFMAM). Topologically, residues 685–695 (EHHGMSPTFEA) are extracellular. The helical transmembrane segment at 696–719 (MLQIGNIVFTIFFTAEMVFKIIAF) threads the bilayer. Topologically, residues 720 to 727 (DPYYYFQK) are cytoplasmic. Residues 728–747 (KWNIFDCIIVTVSLLELGVA) traverse the membrane as a helical segment. At 748–753 (KKGSLS) the chain is on the extracellular side. Residues 754–773 (VLRSFRLLRVFKLAKSWPTL) traverse the membrane as a helical; Voltage-sensor segment. The Cytoplasmic portion of the chain corresponds to 774-789 (NTLIKIIGNSVGALGN). The helical transmembrane segment at 790 to 810 (LTIILAIIVFVFALVGKQLLG) threads the bilayer. The Extracellular portion of the chain corresponds to 811–834 (ENYRNNRKNISAPHEDWPRWHMHD). An N-linked (GlcNAc...) asparagine glycan is attached at Asn819. The pore-forming intramembrane region spans 835–855 (FFHSFLIVFRILCGEWIENMW). Residues 856–864 (ACMEVGQKS) are Extracellular-facing. A disulfide bridge links Cys857 with Cys866. Residues 865–890 (ICLILFLTVMVLGNLVVLNLFIALLL) form a helical membrane-spanning segment. Residues 891–1147 (NSFSADNLTA…GWQVRKTCYR (257 aa)) lie on the Cytoplasmic side of the membrane. Disordered stretches follow at residues 963–986 (AANTARGSSGGLQAPRGPRDEHSD) and 1041–1089 (DHLT…GSTV). An III repeat occupies 1140-1449 (QVRKTCYRIV…KKYYNAMKKL (310 aa)). Residues 1148–1171 (IVEHSWFESFIIFMILLSSGSLAF) form a helical membrane-spanning segment. Over 1172–1184 (EDYYLDQKPTVKA) the chain is Extracellular. A helical membrane pass occupies residues 1185 to 1210 (LLEYTDRVFTFIFVFEMLLKWVAYGF). Residues 1211–1216 (KKYFTN) are Cytoplasmic-facing. A helical membrane pass occupies residues 1217–1238 (AWCWLDFLIVNISLISLTAKIL). At 1239 to 1242 (EYSE) the chain is on the extracellular side. A helical; Voltage-sensor membrane pass occupies residues 1243–1264 (VAPIKALRTLRALRPLRALSRF). The Cytoplasmic segment spans residues 1265–1283 (EGMRVVVDALVGAIPSIMN). A helical membrane pass occupies residues 1284–1311 (VLLVCLIFWLIFSIMGVNLFAGKFWRCI). N-linked (GlcNAc...) asparagine glycosylation is found at Asn1312, Asn1328, and Asn1336. The Extracellular portion of the chain corresponds to 1312–1353 (NYTDGEFSLVPLSIVNNKSDCKIQNSTGSFFWVNVKVNFDNV). Positions 1354–1375 (AMGYLALLQVATFKGWMDIMYA) form an intramembrane region, pore-forming. Over 1376–1391 (AVDSREVNMQPKWEDN) the chain is Extracellular. Residues 1392–1418 (VYMYLYFVIFIIFGGFFTLNLFVGVII) form a helical membrane-spanning segment. Residues 1419 to 1471 (DNFNQQKKKLGGQDIFMTEEQKKYYNAMKKLGSKKPQKPIPRPLNKFQGFVFD) are Cytoplasmic-facing. Residue Ser1451 is modified to Phosphoserine; by PKC. An IV repeat occupies 1458–1757 (IPRPLNKFQG…WEKFDPEATQ (300 aa)). A helical membrane pass occupies residues 1472 to 1495 (IVTRQAFDITIMVLICLNMITMMV). Topologically, residues 1496–1506 (ETDDQSEEKTK) are extracellular. Residues 1507 to 1530 (ILGKINQFFVAVFTGECVMKMFAL) form a helical membrane-spanning segment. The Cytoplasmic segment spans residues 1531 to 1536 (RQYYFT). Residues 1537–1560 (NGWNVFDFIVVVLSIASLIFSAIL) form a helical membrane-spanning segment. The Extracellular portion of the chain corresponds to 1561 to 1572 (KSLQSYFSPTLF). The helical; Voltage-sensor transmembrane segment at 1573–1594 (RVIRLARIGRILRLIRAAKGIR) threads the bilayer. Over 1595–1609 (TLLFALMMSLPALFN) the chain is Cytoplasmic. A helical membrane pass occupies residues 1610–1632 (IGLLLFLVMFIYSIFGMSSFPHV). Residues 1633–1646 (RWEAGIDDMFNFQT) are Extracellular-facing. The segment at residues 1647 to 1669 (FANSMLCLFQITTSAGWDGLLSP) is an intramembrane region (pore-forming). The Extracellular portion of the chain corresponds to 1670–1697 (ILNTGPPYCDPNLPNSNGTRGDCGSPAV). Asn1686 carries N-linked (GlcNAc...) asparagine glycosylation. A helical transmembrane segment spans residues 1698–1722 (GIIFFTTYIIISFLIMVNMYIAVIL). Topologically, residues 1723–1956 (ENFNVATEES…TSMELIAPGP (234 aa)) are cytoplasmic. The IQ domain maps to 1851-1880 (EDISATVIQKAYRSYVLHRSMALSNTPCVP). Positions 1909–1956 (SETASATSFPPSYESVTRGLSDRVNMRTSSSIQNEDEATSMELIAPGP) are disordered.

It belongs to the sodium channel (TC 1.A.1.10) family. Nav1.8/SCN10A subfamily. In terms of assembly, the channel consists of an ion conducting pore forming alpha-subunit regulated by one or more associated auxiliary subunits SCN1B, SCN2B and SCN3B; electrophysiological properties may vary depending on the type of the associated beta subunits. Found in a number of complexes with PRX, DYNLT1 and PDZD2. Interacts with proteins such as FSTL1, PRX, DYNLT1, PDZD2, S100A10 and many others. Interacts with NEDD4 and NEDD4L. Ubiquitinated by NEDD4L; which promotes its endocytosis. Post-translationally, phosphorylation at Ser-1451 by PKC in a highly conserved cytoplasmic loop slows inactivation of the sodium channel and reduces peak sodium currents. In terms of processing, lacks the cysteine which covalently binds the conotoxin GVIIJ. This cysteine (position 816) is speculated in other sodium channel subunits alpha to be implied in covalent binding with the sodium channel subunit beta-2 or beta-4. Expressed in the dorsal root ganglia and sciatic nerve.

It localises to the cell membrane. The catalysed reaction is Na(+)(in) = Na(+)(out). In terms of biological role, tetrodotoxin-resistant channel that mediates the voltage-dependent sodium ion permeability of excitable membranes. Assuming opened or closed conformations in response to the voltage difference across the membrane, the protein forms a sodium-selective channel through which sodium ions may pass in accordance with their electrochemical gradient. Plays a role in neuropathic pain mechanisms. This Homo sapiens (Human) protein is Sodium channel protein type 10 subunit alpha.